We begin with the raw amino-acid sequence, 39 residues long: Cytochrome b559 subunit beta (39 aa).

The chain crosses the membrane as a helical span at residues 14–30; it reads WLAVHGLAVPTVSFLGS. His18 contacts heme.

It belongs to the PsbE/PsbF family. In terms of assembly, heterodimer of an alpha subunit and a beta subunit. PSII is composed of 1 copy each of membrane proteins PsbA, PsbB, PsbC, PsbD, PsbE, PsbF, PsbH, PsbI, PsbJ, PsbK, PsbL, PsbM, PsbT, PsbX, PsbY, PsbZ, Psb30/Ycf12, at least 3 peripheral proteins of the oxygen-evolving complex and a large number of cofactors. It forms dimeric complexes. Heme b is required as a cofactor.

The protein resides in the plastid. It localises to the chloroplast thylakoid membrane. Its function is as follows. This b-type cytochrome is tightly associated with the reaction center of photosystem II (PSII). PSII is a light-driven water:plastoquinone oxidoreductase that uses light energy to abstract electrons from H(2)O, generating O(2) and a proton gradient subsequently used for ATP formation. It consists of a core antenna complex that captures photons, and an electron transfer chain that converts photonic excitation into a charge separation. This chain is Cytochrome b559 subunit beta, found in Lotus japonicus (Lotus corniculatus var. japonicus).